Reading from the N-terminus, the 308-residue chain is Olfactory receptor 2T7 (308 aa).

Topologically, residues 1–17 are extracellular; it reads MPTLSFWVCSATPVSPG. Residues 18–40 form a helical membrane-spanning segment; sequence FFALILLVFVTSIASNVVKIILI. At 41-51 the chain is on the cytoplasmic side; sequence HIDSRLHTPMY. The chain crosses the membrane as a helical span at residues 52-74; it reads FLLSQLSLRDILYISTIVPKMLV. Residues 75–88 lie on the Extracellular side of the membrane; the sequence is DQVMSQRAISFAGC. A disulfide bridge connects residues cysteine 88 and cysteine 170. Residues 89 to 109 form a helical membrane-spanning segment; sequence TAQHFLYLTLAGAEFFLLGLM. The Cytoplasmic portion of the chain corresponds to 110–130; the sequence is SCDRYVAICNPLHYPDLMSRK. Residues 131–151 traverse the membrane as a helical segment; that stretch reads ICWLIVAAAWLGGSIDGFLLT. Residues 152 to 188 lie on the Extracellular side of the membrane; sequence PVTMQFPFCASREINHFFCEVPALLKLSCTDTSAYET. A helical membrane pass occupies residues 189 to 209; it reads AMYVCCIMMLLIPFSVISGSY. The Cytoplasmic segment spans residues 210-235; sequence TRILITVYRMSEAEGRRKAVATCSSH. The chain crosses the membrane as a helical span at residues 236–256; sequence MVVVSLFYGAAMYTYVLPHSY. At 257-262 the chain is on the extracellular side; that stretch reads HTPEQD. Residues 263–283 form a helical membrane-spanning segment; it reads KAVSAFYTILTPMLNPLIYSL. Residues 284–308 are Cytoplasmic-facing; that stretch reads RNKDVTGALQKVVGRCVSSGKVTTF.

Belongs to the G-protein coupled receptor 1 family.

It is found in the cell membrane. Odorant receptor. The sequence is that of Olfactory receptor 2T7 (OR2T7) from Homo sapiens (Human).